Reading from the N-terminus, the 261-residue chain is CD40 ligand (261 aa).

Residues 1-22 lie on the Cytoplasmic side of the membrane; it reads MIETYNQTSPRSAATGLPISMK. Residues 23-46 form a helical; Signal-anchor for type II membrane protein membrane-spanning segment; that stretch reads IFMYLLTVFLITQMIGSALFAVYL. Over 47–261 the chain is Extracellular; sequence HRRLDKIEDE…GFTSFGLLKL (215 aa). One can recognise a THD domain in the interval 122–261; the sequence is IAAHVISEAS…GFTSFGLLKL (140 aa). Cysteine 178 and cysteine 218 are disulfide-bonded. The N-linked (GlcNAc...) (complex) asparagine; alternate glycan is linked to asparagine 240. A glycan (N-linked (GlcNAc...) (high mannose) asparagine; alternate) is linked at asparagine 240.

It belongs to the tumor necrosis factor family. Homotrimer. Interacts with isoform 3 of CD28. CD40 ligand, soluble form: Exists as either a monomer or a homotrimer. Forms a ternary complex between CD40 and integrins for CD40-CD40LG signaling. The soluble form derives from the membrane form by proteolytic processing. Post-translationally, N-linked glycan is a mixture of high mannose and complex type. Glycan structure does not influence binding affinity to CD40. In terms of processing, not O-glycosylated. In terms of tissue distribution, specifically expressed on activated CD4+ T-lymphocytes.

It localises to the cell membrane. The protein localises to the cell surface. It is found in the secreted. Functionally, cytokine that acts as a ligand to CD40/TNFRSF5. Costimulates T-cell proliferation and cytokine production. Its cross-linking on T-cells generates a costimulatory signal which enhances the production of IL4 and IL10 in conjunction with the TCR/CD3 ligation and CD28 costimulation. Induces the activation of NF-kappa-B. Induces the activation of kinases MAPK8 and PAK2 in T-cells. Induces tyrosine phosphorylation of isoform 3 of CD28. Mediates B-cell proliferation in the absence of co-stimulus as well as IgE production in the presence of IL4. Involved in immunoglobulin class switching. In terms of biological role, acts as a ligand for integrins, specifically ITGA5:ITGB1 and ITGAV:ITGB3; both integrins and the CD40 receptor are required for activation of CD40-CD40LG signaling, which have cell-type dependent effects, such as B-cell activation, NF-kappa-B signaling and anti-apoptotic signaling. The protein is CD40 ligand (CD40LG) of Homo sapiens (Human).